Here is a 391-residue protein sequence, read N- to C-terminus: Phosphoglycerate kinase (391 aa).

Residues 21-23 (DLN), Arg-36, 59-62 (HLGR), Arg-113, and Arg-146 contribute to the substrate site. Residues Lys-197, Glu-319, and 345–348 (GGDT) contribute to the ATP site.

It belongs to the phosphoglycerate kinase family. As to quaternary structure, monomer.

The protein localises to the cytoplasm. It carries out the reaction (2R)-3-phosphoglycerate + ATP = (2R)-3-phospho-glyceroyl phosphate + ADP. It functions in the pathway carbohydrate degradation; glycolysis; pyruvate from D-glyceraldehyde 3-phosphate: step 2/5. In Shewanella halifaxensis (strain HAW-EB4), this protein is Phosphoglycerate kinase.